Consider the following 380-residue polypeptide: MLQTLYDYFWWERLWLPVNLTWADLEDRDGRVYAKASDLYITLPLALLFLIVRYFFELYVATPLAALLNIKEKTRLRAPPNATLEHFYLTSGKQPKQVEVELLSRQSGLSGRQVERWFRRRRNQDRPSLLKKFREASWRFTFYLIAFIAGMAVIVDKPWFYDMKKVWEGYPIQSTIPSQYWYYMIELSFYWSLLFSIASDVKRKDFKEQIIHHVATIILISFSWFANYIRAGTLIMALHDSSDYLLESAKMFNYAGWKNTCNNIFIVFAIVFIITRLVILPFWILHCTLVYPLELYPAFFGYYFFNSMMGVLQLLHIFWAYLILRMAHKFITGKLVEDERSDREETESSEGEEAAAGGGAKSRPLANGHPILNNNHRKND.

The Lumenal portion of the chain corresponds to 1 to 40 (MLQTLYDYFWWERLWLPVNLTWADLEDRDGRVYAKASDLY). N-linked (GlcNAc...) asparagine glycosylation occurs at Asn19. The helical transmembrane segment at 41-61 (ITLPLALLFLIVRYFFELYVA) threads the bilayer. The interval 67-128 (LLNIKEKTRL…RRRRNQDRPS (62 aa)) is homeobox-like. The region spanning 131–332 (KKFREASWRF…ILRMAHKFIT (202 aa)) is the TLC domain. 4 consecutive transmembrane segments (helical) span residues 140–160 (FTFY…KPWF), 181–201 (WYYM…ASDV), 209–229 (QIIH…ANYI), and 264–284 (IFIV…PFWI). Positions 291-300 (YPLELYPAFF) match the Last loop motif motif. A helical membrane pass occupies residues 304 to 324 (FFNSMMGVLQLLHIFWAYLIL). Residues 325-380 (RMAHKFITGKLVEDERSDREETESSEGEEAAAGGGAKSRPLANGHPILNNNHRKND) lie on the Cytoplasmic side of the membrane. Residues 338-380 (DERSDREETESSEGEEAAAGGGAKSRPLANGHPILNNNHRKND) form a disordered region. At Ser341 the chain carries Phosphoserine. Over residues 344 to 353 (EETESSEGEE) the composition is skewed to acidic residues. At Thr346 the chain carries Phosphothreonine. Phosphoserine occurs at positions 348 and 349.

Interacts with ATP6V0C, ASGR1, ASGR2 and SLC22A1/OCT1. Interacts with ELOV1, HSD17B12 and TECR. Interacts with NDUFS2. Interacts with PAQR4; the interaction regulates the stability and activity of CERS2 and is inhibited in presence of ceramides. Acetylated. Deacetylation by SIRT3 increases enzyme activity and promotes mitochondrial ceramide accumulation. Post-translationally, phosphorylated at the C-terminus by CK2, leading to increase the ceramide synthase activity. As to expression, expressed in kidney, liver, brain, heart, placenta and lung.

The protein resides in the endoplasmic reticulum membrane. It carries out the reaction a very long-chain fatty acyl-CoA + a sphingoid base = an N-(very-long-chain fatty acyl)-sphingoid base + CoA + H(+). It catalyses the reaction docosanoyl-CoA + sphinganine = N-docosanoylsphinganine + CoA + H(+). The catalysed reaction is tetracosanoyl-CoA + sphinganine = N-tetracosanoylsphinganine + CoA + H(+). The enzyme catalyses hexacosanoyl-CoA + sphinganine = N-hexacosanoylsphinganine + CoA + H(+). It carries out the reaction (15Z)-tetracosenoyl-CoA + sphinganine = N-(15Z-tetracosenoyl)-sphinganine + CoA + H(+). It catalyses the reaction 2-hydroxytetracosanoyl-CoA + sphinganine = N-(2-hydroxytetracosanoyl)-sphinganine + CoA + H(+). The catalysed reaction is 2-hydroxydocosanoyl-CoA + sphinganine = N-(2-hydroxydocosanoyl)-sphinganine + CoA + H(+). The enzyme catalyses 2-hydroxytetracosenoyl-CoA + sphinganine = N-(2-hydroxytetracosenoyl)-sphinganine + CoA + H(+). It carries out the reaction tetracosenoyl-CoA + sphinganine = an N-tetracosenoylsphinganine + CoA + H(+). It catalyses the reaction hexacosenoyl-CoA + sphinganine = N-hexacosenoylsphinganine + CoA + H(+). The catalysed reaction is tetracosanoyl-CoA + sphing-4-enine = N-tetracosanoyl-sphing-4-enine + CoA + H(+). The enzyme catalyses tetracosenoyl-CoA + sphing-4-enine = N-(tetracosenoyl)-sphing-4-enine + CoA + H(+). It carries out the reaction heptadecasphing-4-enine + tetracosanoyl-CoA = N-tetracosanoyl-heptadecasphing-4-enine + CoA + H(+). It catalyses the reaction a fatty acyl-CoA + sphing-4-enine = an N-acylsphing-4-enine + CoA + H(+). The catalysed reaction is sphing-4-enine + hexadecanoyl-CoA = N-hexadecanoylsphing-4-enine + CoA + H(+). The enzyme catalyses sphing-4-enine + octadecanoyl-CoA = N-octadecanoylsphing-4-enine + CoA + H(+). It carries out the reaction eicosanoyl-CoA + sphing-4-enine = N-eicosanoyl-sphing-4-enine + CoA + H(+). It catalyses the reaction sphinganine + hexadecanoyl-CoA = N-hexadecanoylsphinganine + CoA + H(+). The catalysed reaction is sphinganine + octadecanoyl-CoA = N-(octadecanoyl)-sphinganine + CoA + H(+). The enzyme catalyses sphinganine + (9Z)-octadecenoyl-CoA = N-(9Z-octadecenoyl)-sphinganine + CoA + H(+). It carries out the reaction eicosanoyl-CoA + sphinganine = N-eicosanoylsphinganine + CoA + H(+). It functions in the pathway lipid metabolism; sphingolipid metabolism. Its activity is regulated as follows. Ceramide synthase activity is inhibited by sphingosine-1-phosphate. Ceramide synthase that catalyzes the transfer of the acyl chain from acyl-CoA to a sphingoid base, with high selectivity toward very-long-chain fatty acyl-CoA (chain length C22-C27). N-acylates sphinganine and sphingosine bases to form dihydroceramides and ceramides in de novo synthesis and salvage pathways, respectively. Plays a non-redundant role in the synthesis of ceramides with very-long-chain fatty acids in kidney, liver and brain. Regulates the abundance of myelin-specific sphingolipids galactosylceramide and sulfatide that affects myelin sheath architecture and motor neuron functions. The sequence is that of Ceramide synthase 2 from Homo sapiens (Human).